Here is a 133-residue protein sequence, read N- to C-terminus: Large-conductance mechanosensitive channel (133 aa).

2 consecutive transmembrane segments (helical) span residues 10–30 and 76–96; these read FAVK…AAFG and GIFV…FLVV.

The protein belongs to the MscL family. In terms of assembly, homopentamer.

The protein resides in the cell inner membrane. Its function is as follows. Channel that opens in response to stretch forces in the membrane lipid bilayer. May participate in the regulation of osmotic pressure changes within the cell. The protein is Large-conductance mechanosensitive channel of Chlorobium phaeobacteroides (strain BS1).